A 437-amino-acid polypeptide reads, in one-letter code: Epsilon-sarcoglycan (437 aa).

Over 1–317 the chain is Extracellular; it reads MQLPRWWELG…LKSRDYYTDF (317 aa). N-linked (GlcNAc...) asparagine glycosylation is present at asparagine 200. The chain crosses the membrane as a helical span at residues 318-338; the sequence is LITLAVPSAVALVLFLILAYI. Topologically, residues 339 to 437 are cytoplasmic; it reads MCCRREGVEK…QQQTTGKWYP (99 aa).

The protein belongs to the sarcoglycan alpha/epsilon family. In terms of processing, N-glycosylated. Ubiquitinated, leading to its degradation by the proteasome. In terms of tissue distribution, ubiquitous.

It localises to the cell membrane. Its subcellular location is the sarcolemma. It is found in the cytoplasm. The protein localises to the cytoskeleton. The protein resides in the cell projection. It localises to the dendrite. Its subcellular location is the golgi apparatus. In terms of biological role, component of the sarcoglycan complex, a subcomplex of the dystrophin-glycoprotein complex which forms a link between the F-actin cytoskeleton and the extracellular matrix. This Homo sapiens (Human) protein is Epsilon-sarcoglycan (SGCE).